The following is a 715-amino-acid chain: Zinc finger protein 544 (715 aa).

Residues 14–85 (VCFEDVAMAF…EQEAPRDWKA (72 aa)) form the KRAB domain. Glycyl lysine isopeptide (Lys-Gly) (interchain with G-Cter in SUMO2) cross-links involve residues Lys-273 and Lys-289. The C2H2-type 1; atypical zinc-finger motif lies at 354 to 374 (SVCNQCGKSFSCCKLIHQRTH). C2H2-type zinc fingers lie at residues 380–402 (FECTQCGKSFSQSYDLVIHQRTH), 408–430 (YECDLCGKSFTQRSKLITHQRIH), 436–458 (YQCIECRKSFRWNSNLIVHQRIH), 464–486 (YECTHCGKSFSQSYELVTHKRTH), 492–514 (FKCTQCGKSFSQKYDLVVHQRTH), 520–542 (YECNLCGKSFSQSSKLITHQRIH), 548–570 (YQCIECGKSFRWNSNLVIHQRIH), 576–598 (YDCTHCGKSFSQSYQLVAHKRTH), 604–626 (YECNECGKAFNRSTQLIRHLQIH), 632–654 (YKCNQCNKAFARSSYLVMHQRTH), 660–682 (FECSQCGKAFSGSSNLLSHHRIH), and 688–710 (YECSDCGKSFRQQSQLVVHRRTH). Residue Lys-534 forms a Glycyl lysine isopeptide (Lys-Gly) (interchain with G-Cter in SUMO2) linkage.

Belongs to the krueppel C2H2-type zinc-finger protein family.

The protein resides in the nucleus. Functionally, may be involved in transcriptional regulation. This Homo sapiens (Human) protein is Zinc finger protein 544 (ZNF544).